A 295-amino-acid polypeptide reads, in one-letter code: tRNA(Ile)-lysidine synthase (295 aa).

An ATP-binding site is contributed by 10–15 (SGGPDS).

Belongs to the tRNA(Ile)-lysidine synthase family.

It localises to the cytoplasm. It catalyses the reaction cytidine(34) in tRNA(Ile2) + L-lysine + ATP = lysidine(34) in tRNA(Ile2) + AMP + diphosphate + H(+). Ligates lysine onto the cytidine present at position 34 of the AUA codon-specific tRNA(Ile) that contains the anticodon CAU, in an ATP-dependent manner. Cytidine is converted to lysidine, thus changing the amino acid specificity of the tRNA from methionine to isoleucine. The sequence is that of tRNA(Ile)-lysidine synthase from Malacoplasma penetrans (strain HF-2) (Mycoplasma penetrans).